The primary structure comprises 522 residues: Nuclear pore glycoprotein p62 (522 aa).

The residue at position 2 (S2) is an N-acetylserine. 5 consecutive repeat copies span residues F6 to G7, F44 to G45, F76 to G77, F114 to G115, and F142 to G143. Residues F6–G143 form a 5 X 2 AA repeats of F-G region. The segment covering S169–S179 has biased composition (polar residues). Disordered stretches follow at residues S169–T215 and A260–T288. 2 stretches are compositionally biased toward low complexity: residues A180 to T215 and G262 to T288. A required for centrosome localization region spans residues M328 to L458. Positions M328–L458 form a coiled coil. O-linked (GlcNAc) threonine glycosylation is present at T373. 2 positions are modified to phosphoserine: S408 and S418. O-linked (GlcNAc) serine glycosylation is present at S468.

The protein belongs to the nucleoporin NSP1/NUP62 family. Component of the p62 complex, a complex at least composed of NUP62, NUP54, and NUP58. Interacts with NUP88. Interacts with NUTF2. Interacts with HIKESHI. Interacts with OSBPL8. Interacts with CAPG. Interacts with SAS6 and TUBG1 at the centrosome. Interacts with MCM3AP isoform GANP. As to quaternary structure, (Microbial infection) Interacts with Epstein-barr virus BGLF4; this interaction allows BGLF4 nuclear entry. In terms of processing, O-glycosylated. Contains about 10 N-acetylglucosamine side chain sites predicted for the entire protein, among which only one in the C-terminal. Post-translationally, the inner channel of the NPC has a different redox environment from the cytoplasm and allows the formation of interchain disulfide bonds between some nucleoporins, the significant increase of these linkages upon oxidative stress reduces the permeability of the NPC.

It localises to the nucleus. The protein localises to the nuclear pore complex. Its subcellular location is the cytoplasm. The protein resides in the cytoskeleton. It is found in the spindle pole. It localises to the nucleus envelope. The protein localises to the microtubule organizing center. Its subcellular location is the centrosome. In terms of biological role, essential component of the nuclear pore complex. The N-terminal is probably involved in nucleocytoplasmic transport. The C-terminal is involved in protein-protein interaction probably via coiled-coil formation, promotes its association with centrosomes and may function in anchorage of p62 to the pore complex. Plays a role in mitotic cell cycle progression by regulating centrosome segregation, centriole maturation and spindle orientation. It might be involved in protein recruitment to the centrosome after nuclear breakdown. This is Nuclear pore glycoprotein p62 (NUP62) from Homo sapiens (Human).